The chain runs to 273 residues: MDDKKMAVNLRNDDLSEETKTLISSLPSDKDSTGINVCKYQGCWYTHHFLQAVLNFQKNFKPQDTNIIVASFPKCGTTWLKALTFSLVHRSKHPSHDHHHPLLSNNPHVLFSSSPRLFSTHMPSHTLQEVLKDSTCKVVYICRNMKDTLETFESFCKGVNFFGPFWDQVLSYWRRSLEDPNHVLFMRFEEMKAEPHEQIKRLAEFLDSPLLRKKKRTDCLEINKTGKLCEGRDNKTFFRKGEVGDWKNYLTPEMENKIDMIIQEKLQNSGLKF.

74–79 (KCGTTW) lines the 3'-phosphoadenylyl sulfate pocket. His-121 serves as the catalytic Proton acceptor. 3'-phosphoadenylyl sulfate contacts are provided by residues Arg-143 and 239 to 241 (RKG).

Belongs to the sulfotransferase 1 family.

Its subcellular location is the cytoplasm. Functionally, sulfotransferase that utilizes 3'-phospho-5'-adenylyl sulfate (PAPS) as sulfonate donor. The chain is Cytosolic sulfotransferase 4 (SOT4) from Arabidopsis thaliana (Mouse-ear cress).